The following is a 226-amino-acid chain: Phosphoribosylformylglycinamidine synthase subunit PurQ (226 aa).

In terms of domain architecture, Glutamine amidotransferase type-1 spans 3-226 (RVAVIRFPGT…FESLVEWCRS (224 aa)). The Nucleophile role is filled by Cys86. Residues His199 and Glu201 contribute to the active site.

Part of the FGAM synthase complex composed of 1 PurL, 1 PurQ and 2 PurS subunits.

The protein resides in the cytoplasm. It carries out the reaction N(2)-formyl-N(1)-(5-phospho-beta-D-ribosyl)glycinamide + L-glutamine + ATP + H2O = 2-formamido-N(1)-(5-O-phospho-beta-D-ribosyl)acetamidine + L-glutamate + ADP + phosphate + H(+). The enzyme catalyses L-glutamine + H2O = L-glutamate + NH4(+). It functions in the pathway purine metabolism; IMP biosynthesis via de novo pathway; 5-amino-1-(5-phospho-D-ribosyl)imidazole from N(2)-formyl-N(1)-(5-phospho-D-ribosyl)glycinamide: step 1/2. Functionally, part of the phosphoribosylformylglycinamidine synthase complex involved in the purines biosynthetic pathway. Catalyzes the ATP-dependent conversion of formylglycinamide ribonucleotide (FGAR) and glutamine to yield formylglycinamidine ribonucleotide (FGAM) and glutamate. The FGAM synthase complex is composed of three subunits. PurQ produces an ammonia molecule by converting glutamine to glutamate. PurL transfers the ammonia molecule to FGAR to form FGAM in an ATP-dependent manner. PurS interacts with PurQ and PurL and is thought to assist in the transfer of the ammonia molecule from PurQ to PurL. This chain is Phosphoribosylformylglycinamidine synthase subunit PurQ, found in Methanopyrus kandleri (strain AV19 / DSM 6324 / JCM 9639 / NBRC 100938).